A 194-amino-acid polypeptide reads, in one-letter code: MLSSPLRVAVVCVSNINRSMEAHSILRRKGLSVRSFGTESHVRLPGRRPNHPVVYDFATTYKEMYNDLLRKDRECYTHNGILHILGRNERIKPGPERFQECTEFFDVIFTCEERVYDTVVEDLCSREQQTFQPVHVINMDIKDTLEGAILGAFLICEICQCLQQSDDMEDSLEELLLQMEEKAGKSFLHTVCFY.

The protein belongs to the SSU72 phosphatase family.

It localises to the nucleus. It catalyses the reaction O-phospho-L-seryl-[protein] + H2O = L-seryl-[protein] + phosphate. The enzyme catalyses O-phospho-L-threonyl-[protein] + H2O = L-threonyl-[protein] + phosphate. Its function is as follows. Protein phosphatase that catalyzes the dephosphorylation of the C-terminal domain of RNA polymerase II. Plays a role in RNA processing and termination. The polypeptide is RNA polymerase II subunit A C-terminal domain phosphatase SSU72 like protein 6 (Homo sapiens (Human)).